Here is a 362-residue protein sequence, read N- to C-terminus: tRNA 2-selenouridine synthase (362 aa).

Positions phenylalanine 12–glutamate 135 constitute a Rhodanese domain. Cysteine 95 functions as the S-selanylcysteine intermediate in the catalytic mechanism.

The protein belongs to the SelU family. Monomer.

The catalysed reaction is 5-methylaminomethyl-2-thiouridine(34) in tRNA + selenophosphate + (2E)-geranyl diphosphate + H2O + H(+) = 5-methylaminomethyl-2-selenouridine(34) in tRNA + (2E)-thiogeraniol + phosphate + diphosphate. The enzyme catalyses 5-methylaminomethyl-2-thiouridine(34) in tRNA + (2E)-geranyl diphosphate = 5-methylaminomethyl-S-(2E)-geranyl-thiouridine(34) in tRNA + diphosphate. It carries out the reaction 5-methylaminomethyl-S-(2E)-geranyl-thiouridine(34) in tRNA + selenophosphate + H(+) = 5-methylaminomethyl-2-(Se-phospho)selenouridine(34) in tRNA + (2E)-thiogeraniol. It catalyses the reaction 5-methylaminomethyl-2-(Se-phospho)selenouridine(34) in tRNA + H2O = 5-methylaminomethyl-2-selenouridine(34) in tRNA + phosphate. Functionally, involved in the post-transcriptional modification of the uridine at the wobble position (U34) of tRNA(Lys), tRNA(Glu) and tRNA(Gln). Catalyzes the conversion of 2-thiouridine (S2U-RNA) to 2-selenouridine (Se2U-RNA). Acts in a two-step process involving geranylation of 2-thiouridine (S2U) to S-geranyl-2-thiouridine (geS2U) and subsequent selenation of the latter derivative to 2-selenouridine (Se2U) in the tRNA chain. The chain is tRNA 2-selenouridine synthase from Alcanivorax borkumensis (strain ATCC 700651 / DSM 11573 / NCIMB 13689 / SK2).